The following is a 104-amino-acid chain: Large ribosomal subunit protein uL24 (104 aa).

This sequence belongs to the universal ribosomal protein uL24 family. As to quaternary structure, part of the 50S ribosomal subunit.

One of two assembly initiator proteins, it binds directly to the 5'-end of the 23S rRNA, where it nucleates assembly of the 50S subunit. Functionally, one of the proteins that surrounds the polypeptide exit tunnel on the outside of the subunit. The sequence is that of Large ribosomal subunit protein uL24 from Cronobacter sakazakii (strain ATCC BAA-894) (Enterobacter sakazakii).